The primary structure comprises 271 residues: Mannosyl-3-phosphoglycerate phosphatase (271 aa).

Asp-13 serves as the catalytic Nucleophile. Mg(2+)-binding residues include Asp-13, Asp-15, and Asp-214.

The protein belongs to the HAD-like hydrolase superfamily. MPGP family. Mg(2+) is required as a cofactor.

It is found in the cytoplasm. It catalyses the reaction 2-O-(alpha-D-mannosyl)-3-phosphoglycerate + H2O = (2R)-2-O-(alpha-D-mannosyl)-glycerate + phosphate. The chain is Mannosyl-3-phosphoglycerate phosphatase from Escherichia coli O17:K52:H18 (strain UMN026 / ExPEC).